Here is a 277-residue protein sequence, read N- to C-terminus: Undecaprenyl-diphosphatase (277 aa).

8 helical membrane passes run 1-21 (MDIIQAIIIGIVQGLTEFLPV), 38-58 (SSLAFDVFLHLGSLIAVLWFF), 93-113 (LVWYVIIATIPVGLVGVLFES), 118-138 (LFAGALYVPAFFLFVTGTILY), 168-188 (AILPGLSRSGTTIAAGLVIGL), 191-211 (EFAAKFSFILSIPAILGAFVV), 222-242 (FNALAILFGFLAALISGYLAI), and 256-276 (IFAYYCWIVGIIVFMGSITHL).

The protein belongs to the UppP family.

The protein localises to the cell membrane. The catalysed reaction is di-trans,octa-cis-undecaprenyl diphosphate + H2O = di-trans,octa-cis-undecaprenyl phosphate + phosphate + H(+). Its function is as follows. Catalyzes the dephosphorylation of undecaprenyl diphosphate (UPP). The chain is Undecaprenyl-diphosphatase from Methanobrevibacter smithii (strain ATCC 35061 / DSM 861 / OCM 144 / PS).